We begin with the raw amino-acid sequence, 914 residues long: Origin recognition complex subunit 1 (914 aa).

Positions 48 to 188 (IKLGRGDSVV…PTGEKFVDIN (141 aa)) constitute a BAH domain. Residues 218-343 (KEIKRGPQKK…PKDPSKPRQM (126 aa)) are disordered. The span at 221 to 230 (KRGPQKKDKA) shows a compositional bias: basic and acidic residues. At serine 237 the chain carries Phosphoserine. A compositionally biased stretch (acidic residues) spans 247–296 (TDNEDGNEDESSDYESPSDIDVSEDMDSGEISADELEEEEDEEEDEDEEE). Over residues 303–313 (NSPRKRGRKIK) the composition is skewed to basic residues. Residues valine 435 and 479–487 (GTPGVGKTL) each bind ATP. Residues aspartate 566 and glutamate 567 each contribute to the Mg(2+) site. ATP-binding positions include glutamate 567, asparagine 600, arginine 704, and 726 to 733 (GYGYDGKT).

The protein belongs to the ORC1 family. Component of the origin recognition complex (ORC) composed of at least ORC1, ORC2, ORC3, ORC4, ORC5 and ORC6. Interacts with MCM10 and TAH11.

Its subcellular location is the nucleus. Its function is as follows. Component of the origin recognition complex (ORC) that binds origins of replication. It has a role in both chromosomal replication and mating type transcriptional silencing. Binds to the ARS consensus sequence (ACS) of origins of replication. The polypeptide is Origin recognition complex subunit 1 (ORC1) (Saccharomyces cerevisiae (strain ATCC 204508 / S288c) (Baker's yeast)).